The primary structure comprises 101 residues: NADH-quinone oxidoreductase subunit K (101 aa).

3 consecutive transmembrane segments (helical) span residues proline 5–phenylalanine 25, isoleucine 30–phenylalanine 50, and leucine 62–isoleucine 82.

This sequence belongs to the complex I subunit 4L family. NDH-1 is composed of 14 different subunits. Subunits NuoA, H, J, K, L, M, N constitute the membrane sector of the complex.

The protein localises to the cell inner membrane. It catalyses the reaction a quinone + NADH + 5 H(+)(in) = a quinol + NAD(+) + 4 H(+)(out). Its function is as follows. NDH-1 shuttles electrons from NADH, via FMN and iron-sulfur (Fe-S) centers, to quinones in the respiratory chain. The immediate electron acceptor for the enzyme in this species is believed to be a menaquinone. Couples the redox reaction to proton translocation (for every two electrons transferred, four hydrogen ions are translocated across the cytoplasmic membrane), and thus conserves the redox energy in a proton gradient. The protein is NADH-quinone oxidoreductase subunit K of Salinibacter ruber (strain DSM 13855 / M31).